Here is a 355-residue protein sequence, read N- to C-terminus: UDP-N-acetylglucosamine--N-acetylmuramyl-(pentapeptide) pyrophosphoryl-undecaprenol N-acetylglucosamine transferase (355 aa).

Residues 15 to 17 (TGG), Asn-127, Arg-163, Ser-191, Ile-244, 263 to 268 (ALTVSE), and Gln-288 contribute to the UDP-N-acetyl-alpha-D-glucosamine site.

It belongs to the glycosyltransferase 28 family. MurG subfamily.

It localises to the cell inner membrane. It catalyses the reaction di-trans,octa-cis-undecaprenyl diphospho-N-acetyl-alpha-D-muramoyl-L-alanyl-D-glutamyl-meso-2,6-diaminopimeloyl-D-alanyl-D-alanine + UDP-N-acetyl-alpha-D-glucosamine = di-trans,octa-cis-undecaprenyl diphospho-[N-acetyl-alpha-D-glucosaminyl-(1-&gt;4)]-N-acetyl-alpha-D-muramoyl-L-alanyl-D-glutamyl-meso-2,6-diaminopimeloyl-D-alanyl-D-alanine + UDP + H(+). It functions in the pathway cell wall biogenesis; peptidoglycan biosynthesis. Cell wall formation. Catalyzes the transfer of a GlcNAc subunit on undecaprenyl-pyrophosphoryl-MurNAc-pentapeptide (lipid intermediate I) to form undecaprenyl-pyrophosphoryl-MurNAc-(pentapeptide)GlcNAc (lipid intermediate II). This chain is UDP-N-acetylglucosamine--N-acetylmuramyl-(pentapeptide) pyrophosphoryl-undecaprenol N-acetylglucosamine transferase, found in Salmonella paratyphi B (strain ATCC BAA-1250 / SPB7).